The primary structure comprises 311 residues: Pyrimidine-specific ribonucleoside hydrolase RihA (311 aa).

The active site involves His240.

Belongs to the IUNH family. RihA subfamily.

Its function is as follows. Hydrolyzes cytidine or uridine to ribose and cytosine or uracil, respectively. This is Pyrimidine-specific ribonucleoside hydrolase RihA from Salmonella agona (strain SL483).